Here is a 491-residue protein sequence, read N- to C-terminus: Ribosome biogenesis protein YTM1 (491 aa).

Residues 8 to 103 are ubiquitin-like (UBL) domain; the sequence is IKIKFTTNES…EAFLTIEYTR (96 aa). The tract at residues 113–491 is sufficient for interaction with ERB1 and association with 66S pre-ribosomes; it reads SFQNDDWISS…QINKGSDISK (379 aa). WD repeat units lie at residues 128 to 167, 169 to 207, 241 to 280, 318 to 358, 360 to 399, 409 to 449, and 456 to 491; these read RNLSAVTSSQLTITNPKILSGSYDGIVKTYNMSGKVEKQY, GHSAAVKSVKWISPTRIVSCGNDQQVRLWKTAYEGVVDQ, GHKAPVVDLAVNQQTKRILSAGYDLNVGFWSTNYKDMAKI, GHTE…CVDT, TTGFSLLSILQLPQVNLIATGSSARHINLHDPRVSASNTN, GHTN…SLYT, and STKSKIFGVCWDSEIGLISGGEDKRVQINKGSDISK. Positions 205–228 are disordered; it reads VDQNEEDEEENEANEGDDGDNDME. A compositionally biased stretch (acidic residues) spans 207–225; that stretch reads QNEEDEEENEANEGDDGDN.

The protein belongs to the WD repeat WDR12/YTM1 family. Component of the NOP7 complex, composed of ERB1, NOP7 and YTM1. The complex is held together by ERB1, which interacts with NOP7 via its N-terminal domain and with YTM1 via a high-affinity interaction between the seven-bladed beta-propeller domains of the 2 proteins. The NOP7 complex associates with the 66S pre-ribosome. Interacts (via UBL domain) with MDN1 (via VWFA/MIDAS domain).

The protein localises to the nucleus. The protein resides in the nucleolus. Its subcellular location is the nucleoplasm. Component of the NOP7 complex, which is required for maturation of the 25S and 5.8S ribosomal RNAs and formation of the 60S ribosome. The polypeptide is Ribosome biogenesis protein YTM1 (Lodderomyces elongisporus (strain ATCC 11503 / CBS 2605 / JCM 1781 / NBRC 1676 / NRRL YB-4239) (Yeast)).